Reading from the N-terminus, the 84-residue chain is MIWTAVIKGSALVTFVQGAMVLVDKIFGEEILPHRIYSSAEASQLLGMDRLEVLGLIRSGTIKAKKVGDNYRILGSNLVDYMNR.

This sequence belongs to the magnetosome MamR family.

The protein resides in the magnetosome. In terms of biological role, may play a role in controlling magnetite number and size but not in control of magnetite morphology. In Paramagnetospirillum magneticum (strain ATCC 700264 / AMB-1) (Magnetospirillum magneticum), this protein is Magnetosome protein MamR.